Consider the following 49-residue polypeptide: Large ribosomal subunit protein bL33 (49 aa).

The protein belongs to the bacterial ribosomal protein bL33 family.

This chain is Large ribosomal subunit protein bL33, found in Lactobacillus acidophilus (strain ATCC 700396 / NCK56 / N2 / NCFM).